Consider the following 394-residue polypeptide: Elongation factor Tu 2 (394 aa).

A tr-type G domain is found at 10-204 (KPHVNVGTIG…HLDTYIPEPE (195 aa)). Residues 19-26 (GHVDHGKT) are G1. A GTP-binding site is contributed by 19-26 (GHVDHGKT). Thr26 provides a ligand contact to Mg(2+). Positions 60–64 (GITIN) are G2. Residues 81–84 (DCPG) are G3. Residues 81 to 85 (DCPGH) and 136 to 139 (NKCD) each bind GTP. Residues 136–139 (NKCD) form a G4 region. Positions 174-176 (SAL) are G5.

Belongs to the TRAFAC class translation factor GTPase superfamily. Classic translation factor GTPase family. EF-Tu/EF-1A subfamily. As to quaternary structure, monomer.

It is found in the cytoplasm. It carries out the reaction GTP + H2O = GDP + phosphate + H(+). Functionally, GTP hydrolase that promotes the GTP-dependent binding of aminoacyl-tRNA to the A-site of ribosomes during protein biosynthesis. In Haemophilus influenzae (strain 86-028NP), this protein is Elongation factor Tu 2.